The chain runs to 283 residues: Protein FdhE homolog (283 aa).

Belongs to the FdhE family.

Its subcellular location is the cytoplasm. Its function is as follows. Necessary for formate dehydrogenase activity. In Aquifex aeolicus (strain VF5), this protein is Protein FdhE homolog.